The following is a 155-amino-acid chain: UPF0251 protein Paes_1249 (155 aa).

Belongs to the UPF0251 family.

The chain is UPF0251 protein Paes_1249 from Prosthecochloris aestuarii (strain DSM 271 / SK 413).